The sequence spans 281 residues: Formamidopyrimidine-DNA glycosylase (281 aa).

The active-site Schiff-base intermediate with DNA is the Pro-2. The active-site Proton donor is the Glu-3. Lys-58 functions as the Proton donor; for beta-elimination activity in the catalytic mechanism. DNA is bound by residues His-94, Arg-113, and Arg-156. The FPG-type; degenerate zinc-finger motif lies at 241-281 (AVYDRVGQPCPGCDCDVARTGGIERMVQSGRSTFFCGRRQR). The Proton donor; for delta-elimination activity role is filled by Arg-271.

Belongs to the FPG family. As to quaternary structure, monomer. It depends on Zn(2+) as a cofactor.

The enzyme catalyses Hydrolysis of DNA containing ring-opened 7-methylguanine residues, releasing 2,6-diamino-4-hydroxy-5-(N-methyl)formamidopyrimidine.. It catalyses the reaction 2'-deoxyribonucleotide-(2'-deoxyribose 5'-phosphate)-2'-deoxyribonucleotide-DNA = a 3'-end 2'-deoxyribonucleotide-(2,3-dehydro-2,3-deoxyribose 5'-phosphate)-DNA + a 5'-end 5'-phospho-2'-deoxyribonucleoside-DNA + H(+). Involved in base excision repair of DNA damaged by oxidation or by mutagenic agents. Acts as a DNA glycosylase that recognizes and removes damaged bases. Has a preference for oxidized purines, such as 7,8-dihydro-8-oxoguanine (8-oxoG). Has AP (apurinic/apyrimidinic) lyase activity and introduces nicks in the DNA strand. Cleaves the DNA backbone by beta-delta elimination to generate a single-strand break at the site of the removed base with both 3'- and 5'-phosphates. The chain is Formamidopyrimidine-DNA glycosylase from Rhodospirillum rubrum (strain ATCC 11170 / ATH 1.1.1 / DSM 467 / LMG 4362 / NCIMB 8255 / S1).